The following is a 363-amino-acid chain: UDP-N-acetylglucosamine--N-acetylmuramyl-(pentapeptide) pyrophosphoryl-undecaprenol N-acetylglucosamine transferase (363 aa).

Residues 10 to 12 (TGG), Asn124, Ser195, Ile250, and Gln295 each bind UDP-N-acetyl-alpha-D-glucosamine.

The protein belongs to the glycosyltransferase 28 family. MurG subfamily.

It localises to the cell membrane. The enzyme catalyses di-trans,octa-cis-undecaprenyl diphospho-N-acetyl-alpha-D-muramoyl-L-alanyl-D-glutamyl-meso-2,6-diaminopimeloyl-D-alanyl-D-alanine + UDP-N-acetyl-alpha-D-glucosamine = di-trans,octa-cis-undecaprenyl diphospho-[N-acetyl-alpha-D-glucosaminyl-(1-&gt;4)]-N-acetyl-alpha-D-muramoyl-L-alanyl-D-glutamyl-meso-2,6-diaminopimeloyl-D-alanyl-D-alanine + UDP + H(+). Its pathway is cell wall biogenesis; peptidoglycan biosynthesis. Functionally, cell wall formation. Catalyzes the transfer of a GlcNAc subunit on undecaprenyl-pyrophosphoryl-MurNAc-pentapeptide (lipid intermediate I) to form undecaprenyl-pyrophosphoryl-MurNAc-(pentapeptide)GlcNAc (lipid intermediate II). This chain is UDP-N-acetylglucosamine--N-acetylmuramyl-(pentapeptide) pyrophosphoryl-undecaprenol N-acetylglucosamine transferase, found in Listeria monocytogenes serotype 4a (strain HCC23).